The primary structure comprises 85 residues: Follicular dendritic cell secreted peptide (85 aa).

Residues 1–17 (MKKVLLLITAILAVAVG) form the signal peptide. The segment at 75 to 83 (SAPTTPLPS) is O-glycosylated at one site.

In terms of processing, O-glycosylated with core 1 or possibly core 8 glycans. Abundantly expressed in tonsil, lymph node, and trachea; strong expression in prostate; lower expression in thyroid, stomach, and colon.

It localises to the secreted. In terms of biological role, can bind to the surface of B-lymphoma cells, but not T-lymphoma cells, consistent with a function as a secreted mediator acting upon B-cells. This chain is Follicular dendritic cell secreted peptide (FDCSP), found in Homo sapiens (Human).